The chain runs to 617 residues: Dihydroxy-acid dehydratase (617 aa).

Asp81 lines the Mg(2+) pocket. Cys122 contacts [2Fe-2S] cluster. Positions 123 and 124 each coordinate Mg(2+). An N6-carboxylysine modification is found at Lys124. Residue Cys195 participates in [2Fe-2S] cluster binding. Residue Glu492 coordinates Mg(2+). The active-site Proton acceptor is Ser518.

This sequence belongs to the IlvD/Edd family. As to quaternary structure, homodimer. It depends on [2Fe-2S] cluster as a cofactor. Mg(2+) is required as a cofactor.

It catalyses the reaction (2R)-2,3-dihydroxy-3-methylbutanoate = 3-methyl-2-oxobutanoate + H2O. The catalysed reaction is (2R,3R)-2,3-dihydroxy-3-methylpentanoate = (S)-3-methyl-2-oxopentanoate + H2O. Its pathway is amino-acid biosynthesis; L-isoleucine biosynthesis; L-isoleucine from 2-oxobutanoate: step 3/4. It functions in the pathway amino-acid biosynthesis; L-valine biosynthesis; L-valine from pyruvate: step 3/4. Functionally, functions in the biosynthesis of branched-chain amino acids. Catalyzes the dehydration of (2R,3R)-2,3-dihydroxy-3-methylpentanoate (2,3-dihydroxy-3-methylvalerate) into 2-oxo-3-methylpentanoate (2-oxo-3-methylvalerate) and of (2R)-2,3-dihydroxy-3-methylbutanoate (2,3-dihydroxyisovalerate) into 2-oxo-3-methylbutanoate (2-oxoisovalerate), the penultimate precursor to L-isoleucine and L-valine, respectively. The sequence is that of Dihydroxy-acid dehydratase from Xanthobacter autotrophicus (strain ATCC BAA-1158 / Py2).